A 733-amino-acid chain; its full sequence is 1,4-alpha-glucan branching enzyme GlgB (733 aa).

Asp413 acts as the Nucleophile in catalysis. Glu466 (proton donor) is an active-site residue.

Belongs to the glycosyl hydrolase 13 family. GlgB subfamily. Monomer.

It catalyses the reaction Transfers a segment of a (1-&gt;4)-alpha-D-glucan chain to a primary hydroxy group in a similar glucan chain.. It functions in the pathway glycan biosynthesis; glycogen biosynthesis. Its function is as follows. Catalyzes the formation of the alpha-1,6-glucosidic linkages in glycogen by scission of a 1,4-alpha-linked oligosaccharide from growing alpha-1,4-glucan chains and the subsequent attachment of the oligosaccharide to the alpha-1,6 position. In Leifsonia xyli subsp. xyli (strain CTCB07), this protein is 1,4-alpha-glucan branching enzyme GlgB.